Here is a 68-residue protein sequence, read N- to C-terminus: Large ribosomal subunit protein uL29 (68 aa).

Belongs to the universal ribosomal protein uL29 family.

The protein is Large ribosomal subunit protein uL29 of Prochlorococcus marinus (strain SARG / CCMP1375 / SS120).